The sequence spans 332 residues: Ferredoxin--NADP reductase (332 aa).

FAD is bound by residues D33, Q41, Y46, A86, F120, D286, and T327.

This sequence belongs to the ferredoxin--NADP reductase type 2 family. As to quaternary structure, homodimer. Requires FAD as cofactor.

The catalysed reaction is 2 reduced [2Fe-2S]-[ferredoxin] + NADP(+) + H(+) = 2 oxidized [2Fe-2S]-[ferredoxin] + NADPH. This chain is Ferredoxin--NADP reductase, found in Rickettsia bellii (strain OSU 85-389).